Reading from the N-terminus, the 32-residue chain is Snaclec (32 aa).

As to quaternary structure, dimer; disulfide-linked. In terms of tissue distribution, expressed by the venom gland.

The protein localises to the secreted. Interferes with one step of hemostasis (modulation of platelet aggregation, or coagulation cascade, for example). This chain is Snaclec, found in Bothrops diporus (Chaco lancehead).